The sequence spans 99 residues: Integration host factor subunit alpha (99 aa).

The protein belongs to the bacterial histone-like protein family. In terms of assembly, heterodimer of an alpha and a beta chain.

Functionally, this protein is one of the two subunits of integration host factor, a specific DNA-binding protein that functions in genetic recombination as well as in transcriptional and translational control. The chain is Integration host factor subunit alpha from Anaeromyxobacter sp. (strain Fw109-5).